We begin with the raw amino-acid sequence, 130 residues long: MSLMDPLANALNHISNCEGVGKSVAYVKPASKLIGRVLNVMQDHGYIGNFEYIEDGRAGIYKVELIGQINKCGAVKPRYAVKKQEFEKFEKRYLPAKGFGLLIVSTPKGLMTHDEAKNQGLGGRLISYVF.

The protein belongs to the universal ribosomal protein uS8 family. In terms of assembly, part of the 30S ribosomal subunit.

Functionally, one of the primary rRNA binding proteins, it binds directly to 16S rRNA central domain where it helps coordinate assembly of the platform of the 30S subunit. The polypeptide is Small ribosomal subunit protein uS8 (Methanothermococcus thermolithotrophicus (Methanococcus thermolithotrophicus)).